The chain runs to 64 residues: Small ribosomal subunit protein eS17 (64 aa).

This sequence belongs to the eukaryotic ribosomal protein eS17 family.

The chain is Small ribosomal subunit protein eS17 from Methanosarcina barkeri (strain Fusaro / DSM 804).